A 206-amino-acid polypeptide reads, in one-letter code: Tumor protein D54 (206 aa).

Residue Met-1 is modified to N-acetylmethionine. A compositionally biased stretch (polar residues) spans 1–14 (MDSAGQDINLNSPN). The interval 1–24 (MDSAGQDINLNSPNKGLLSDSMTD) is disordered. Residues Ser-3, Ser-12, Ser-19, and Ser-21 each carry the phosphoserine modification. The stretch at 38 to 82 (VEGLTEAEEEELRAELTKVEEEIVTLRQVLAAKERHCGELKRRLG) forms a coiled coil. Phosphoserine occurs at positions 96, 149, and 161. The residue at position 163 (Thr-163) is a Phosphothreonine. A Phosphoserine modification is found at Ser-166. Thr-173 carries the phosphothreonine modification. Residues 175 to 185 (KSKVVGDRENG) show a composition bias toward basic and acidic residues. Positions 175–206 (KSKVVGDRENGSDNLPSSAGSGDKPLSDPAPF) are disordered. 2 positions are modified to phosphoserine: Ser-192 and Ser-195.

This sequence belongs to the TPD52 family. Forms a homodimer or heterodimer with other members of the family. Interacts with MAL2.

In Homo sapiens (Human), this protein is Tumor protein D54 (TPD52L2).